The following is a 398-amino-acid chain: Phosphoglycerate kinase (398 aa).

Substrate contacts are provided by residues 23–25 (DFN), arginine 38, 61–64 (HMGK), arginine 122, and arginine 155. ATP is bound by residues lysine 206, glycine 297, glutamate 328, and 354 to 357 (GGDS).

The protein belongs to the phosphoglycerate kinase family. As to quaternary structure, monomer.

Its subcellular location is the cytoplasm. The enzyme catalyses (2R)-3-phosphoglycerate + ATP = (2R)-3-phospho-glyceroyl phosphate + ADP. It functions in the pathway carbohydrate degradation; glycolysis; pyruvate from D-glyceraldehyde 3-phosphate: step 2/5. The polypeptide is Phosphoglycerate kinase (Clostridium botulinum (strain Hall / ATCC 3502 / NCTC 13319 / Type A)).